Reading from the N-terminus, the 182-residue chain is UPF0397 protein BcerKBAB4_2500 (182 aa).

5 consecutive transmembrane segments (helical) span residues 9–29 (VVAI…GFSI), 40–60 (AILT…IGLI), 71–91 (WGIW…MGLI), 114–134 (IAGL…DIIV), and 142–162 (IVIQ…VLGL).

This sequence belongs to the UPF0397 family.

The protein resides in the cell membrane. This Bacillus mycoides (strain KBAB4) (Bacillus weihenstephanensis) protein is UPF0397 protein BcerKBAB4_2500.